A 180-amino-acid polypeptide reads, in one-letter code: UPF0227 protein YcfP (180 aa).

This sequence belongs to the UPF0227 family.

The polypeptide is UPF0227 protein YcfP (Salmonella gallinarum (strain 287/91 / NCTC 13346)).